The sequence spans 222 residues: N-(5'-phosphoribosyl)anthranilate isomerase (222 aa).

It belongs to the TrpF family.

It catalyses the reaction N-(5-phospho-beta-D-ribosyl)anthranilate = 1-(2-carboxyphenylamino)-1-deoxy-D-ribulose 5-phosphate. The protein operates within amino-acid biosynthesis; L-tryptophan biosynthesis; L-tryptophan from chorismate: step 3/5. This is N-(5'-phosphoribosyl)anthranilate isomerase from Xanthomonas oryzae pv. oryzae (strain PXO99A).